A 317-amino-acid polypeptide reads, in one-letter code: Transmembrane and death domain protein 1 (317 aa).

The signal sequence occupies residues 1–27; it reads MAARTLASALVLTLWVWALAPAGAVDA. The Extracellular portion of the chain corresponds to 28–218; sequence MGPHAAVRLA…ERSPMGWAGP (191 aa). The segment covering 62–73 has biased composition (basic and acidic residues); sequence ELSRLSEDRLAR. The disordered stretch occupies residues 62–106; it reads ELSRLSEDRLARPEPLNTTSGSPSRRRRREAAEDPAGRVAGPGEV. The Death domain occupies 66–150; that stretch reads LSEDRLARPE…DVARELGKNL (85 aa). An N-linked (GlcNAc...) asparagine glycan is attached at Asn78. The helical transmembrane segment at 219-239 threads the bilayer; sequence LALGLLTGFVGALGTGALVVL. At 240-317 the chain is on the cytoplasmic side; it reads LTLWITGGDG…SWGSGALDGL (78 aa).

Its subcellular location is the membrane. The sequence is that of Transmembrane and death domain protein 1 from Homo sapiens (Human).